Reading from the N-terminus, the 100-residue chain is Sweet protein mabinlin-4 (100 aa).

4 cysteine pairs are disulfide-bonded: Cys4–Cys49, Cys17–Cys38, Cys39–Cys87, and Cys51–Cys95.

Belongs to the 2S seed storage albumins family. Heterodimer of a small A and a large B chain linked by disulfide bonds.

Functionally, heat stable 2S seed storage protein having sweetness-inducing activity. This Capparis masaikai (Mabinlang) protein is Sweet protein mabinlin-4.